The following is a 155-amino-acid chain: UPF0225 protein PC1_1977 (155 aa).

Belongs to the UPF0225 family.

This is UPF0225 protein PC1_1977 from Pectobacterium carotovorum subsp. carotovorum (strain PC1).